We begin with the raw amino-acid sequence, 223 residues long: Endonuclease V (223 aa).

Mg(2+)-binding residues include Asp-35 and Asp-103.

Belongs to the endonuclease V family. It depends on Mg(2+) as a cofactor.

The protein resides in the cytoplasm. It catalyses the reaction Endonucleolytic cleavage at apurinic or apyrimidinic sites to products with a 5'-phosphate.. Functionally, DNA repair enzyme involved in the repair of deaminated bases. Selectively cleaves double-stranded DNA at the second phosphodiester bond 3' to a deoxyinosine leaving behind the intact lesion on the nicked DNA. This chain is Endonuclease V, found in Shigella flexneri serotype 5b (strain 8401).